A 684-amino-acid chain; its full sequence is Signal peptide peptidase-like 2C (684 aa).

Residues 1–21 form the signal peptide; it reads MACLGFLLPVGFLLLISTVAG. Residues 22–186 are Lumenal-facing; sequence GKYGVAHVVS…APPEPIIDYN (165 aa). Positions 83–163 constitute a PA domain; it reads SPSQRPLRQT…HYADMLDILS (81 aa). N-linked (GlcNAc...) asparagine glycosylation occurs at Asn-100. Residues 187–207 traverse the membrane as a helical segment; sequence MLVIFILAVGTVAAGGYWAGL. The Cytoplasmic portion of the chain corresponds to 208–253; it reads TEANRLQRRRARRGGGSGGHHQLQEAAAAEGAQKEDNEDIPVDFTP. The segment at 216–242 is disordered; it reads RRARRGGGSGGHHQLQEAAAAEGAQKE. The span at 227–238 shows a compositional bias: low complexity; that stretch reads HHQLQEAAAAEG. The chain crosses the membrane as a helical span at residues 254 to 274; the sequence is AMTGVVVTLSCSLMLLLYFFY. Topologically, residues 275–276 are lumenal; sequence DH. The helical transmembrane segment at 277 to 297 threads the bilayer; sequence FVYVTIGIFGLGAGIGLYSCL. Residues 298–319 lie on the Cytoplasmic side of the membrane; it reads SPLVCRLSLRQYQRPPHSLWAS. Residues 320-340 traverse the membrane as a helical segment; the sequence is LPLPLLLLASLCATVIIFWVA. The Lumenal portion of the chain corresponds to 341–346; the sequence is YRNEDR. A helical transmembrane segment spans residues 347 to 365; it reads WAWLLQDTLGISYCLFVLH. Residues 366 to 376 lie on the Cytoplasmic side of the membrane; that stretch reads RVRLPTLKNCS. The chain crosses the membrane as a helical span at residues 377 to 397; the sequence is SFLLALLAFDVFFVFVTPFFT. Asp-386 is a catalytic residue. Residues 398-439 lie on the Lumenal side of the membrane; that stretch reads KTGESIMAQVALGPAESSSHERLPMVLKVPRLRVSALTLCSQ. A helical membrane pass occupies residues 440 to 460; the sequence is PFSILGFGDIVVPGFLVAYCC. Asp-448 is an active-site residue. Topologically, residues 461 to 472 are cytoplasmic; the sequence is RFDVQVCSRQIY. A helical membrane pass occupies residues 473 to 493; the sequence is FVACTVAYAVGLLVTFMAMVL. At 494 to 495 the chain is on the lumenal side; the sequence is MQ. A helical membrane pass occupies residues 496–516; that stretch reads MGQPALLYLVSSTLLTSLAVA. A PAL motif is present at residues 499 to 501; it reads PAL. The Cytoplasmic portion of the chain corresponds to 517–684; the sequence is ACRQELSLFW…RKSMSTQAPL (168 aa). The tract at residues 548 to 614 is disordered; sequence KQEGAADAHT…SDAHLDPNEL (67 aa). A compositionally biased stretch (polar residues) spans 582-592; it reads EIVTISENEAT. The segment covering 594–611 has biased composition (basic and acidic residues); sequence PEDRSDSSEGWSDAHLDP.

Belongs to the peptidase A22B family. In terms of assembly, interacts (via active sites) with FREY; the interaction stabilizes FREY1 protein and inhibits SPPL2C proteolytic activity. Post-translationally, glycosylated. Highly expressed in testis where it is primarily localised in spermatids (at protein level).

The protein resides in the endoplasmic reticulum membrane. Its function is as follows. Sperm-specific intramembrane-cleaving aspartic protease (I-CLiP) that cleaves distinct tail-anchored proteins and SNARE proteins. In elongated spermatids, modulates intracellular Ca(2+) homeostasis by controlling PLN abundance through proteolytic cleavage. During spermatogenesis, processes SNARE proteins and impacts vesicular trafficking which supports compartmental reorganization in maturating spermatids and may play a role in formation of the acrosome. Functionally, in round spermatids, acts as a scaffold protein supporting FREY1 in IZUMO1 recruitment at the endoplasmic reticulum membrane and coordination of IZUMO1 complex assembly. Stabilizes FREY1 at the endoplasmic reticulum membrane through interaction. May recruit IZUMO1 interaction partners. The polypeptide is Signal peptide peptidase-like 2C (Homo sapiens (Human)).